The sequence spans 396 residues: DNA dC-&gt;dU-editing enzyme APOBEC3 (396 aa).

2 CMP/dCMP-type deaminase domains span residues 38–154 (GRKD…AQVA) and 205–324 (EEEF…LCSL). His-71 lines the Zn(2+) pocket. Residue Glu-73 is the Proton donor of the active site. Residues Cys-105, Cys-108, His-255, Cys-283, and Cys-286 each coordinate Zn(2+).

The protein belongs to the cytidine and deoxycytidylate deaminase family. As to quaternary structure, homodimer. Zn(2+) serves as cofactor.

The protein resides in the cytoplasm. It carries out the reaction a 2'-deoxycytidine in single-stranded DNA + H2O + H(+) = a 2'-deoxyuridine in single-stranded DNA + NH4(+). In terms of biological role, DNA deaminase (cytidine deaminase) which acts as an inhibitor of retrovirus replication and retrotransposon mobility via deaminase-dependent and -independent mechanisms. Selectively targets single-stranded DNA and does not deaminate double-stranded DNA or single- or double-stranded RNA. This chain is DNA dC-&gt;dU-editing enzyme APOBEC3 (APOBEC3), found in Cricetulus longicaudatus (Long-tailed dwarf hamster).